Reading from the N-terminus, the 173-residue chain is bZIP transcription factor 44 (173 aa).

The disordered stretch occupies residues 1-65 (MNNKTEMGSS…SRMRKQKHLD (65 aa)). The segment covering 8 to 22 (GSSTSGNCSSVSTTG) has biased composition (low complexity). The segment covering 30–41 (SDLRQRDLIDER) has biased composition (basic and acidic residues). One can recognise a bZIP domain in the interval 39–102 (DERKRKRKQS…VTIEAENDIL (64 aa)). The basic motif stretch occupies residues 41 to 62 (RKRKRKQSNRESARRSRMRKQK). The segment at 67–81 (LTAQVTHLRKENAQI) is leucine-zipper.

In terms of assembly, forms heterodimers with BZIP1, BZIP9, BZIP10, BZIP25 and BZIP63. As to expression, expressed in the micropylar endosperm and radicle tip in early germinating seeds.

The protein resides in the nucleus. Functionally, transcription factor that binds to the DNA G-box motif 5'-CACGTG-3' of MAN7 promoter. Involved in the positive regulation of seed germination through MAN7 gene activation. MAN7 is required for both, loosening of the micropylar endosperm, and rupture of the seed coat in germinating seeds. In Arabidopsis thaliana (Mouse-ear cress), this protein is bZIP transcription factor 44.